Here is a 1164-residue protein sequence, read N- to C-terminus: Receptor-like protein kinase BRI1-like 3 (1164 aa).

A signal peptide spans 1–23 (MKQQWQFLILCLLVLFLTVDSRG). The Extracellular segment spans residues 24-772 (RRLLSDDVND…RSHAHPKKQS (749 aa)). Residue asparagine 32 is glycosylated (N-linked (GlcNAc...) asparagine). The Cys pair 1 signature appears at 65–72 (CTWRGVSC). LRR repeat units lie at residues 77–98 (RVIGLDLRNGGLTGTLNLNNLT), 102–123 (NLRSLYLQGNNFSSGDSSSSSG), 125–146 (SLEVLDLSSNSLTDSSIVDYVF), 151–173 (NLVSVNFSHNKLAGKLKSSPSAS), 176–197 (RITTVDLSNNRFSDEIPETFIA), 202–224 (SLKHLDLSGNNVTGDFSRLSFGL), 227–248 (NLTVFSLSQNSISGDRFPVSLS), 252–274 (LLETLNLSRNSLIGKIPGDDYWG), 278–300 (NLRQLSLAHNLYSGEIPPELSLL), 303–325 (TLEVLDLSGNSLTGQLPQSFTSC), 327–347 (SLQSLNLGNNKLSGDFLSTVV), 352–375 (RITNLYLPFNNISGSVPISLTNCS), 376–397 (NLRVLDLSSNEFTGEVPSGFCS), 403–424 (VLEKLLIANNYLSGTVPVELGK), 427–448 (SLKTIDLSFNALTGLIPKEIWT), 451–473 (KLSDLVMWANNLTGGIPESICVD), 476–498 (NLETLILNNNLLTGSLPESISKC), 500–523 (NMLWISLSSNLLTGEIPVGIGKLE), 524–546 (KLAILQLGNNSLTGNIPSELGNC), and 548–570 (NLIWLDLNSNNLTGNLPGELASQ). N-linked (GlcNAc...) asparagine glycans are attached at residues asparagine 96 and asparagine 112. Asparagine 156 carries N-linked (GlcNAc...) asparagine glycosylation. 3 N-linked (GlcNAc...) asparagine glycosylation sites follow: asparagine 212, asparagine 227, and asparagine 257. N-linked (GlcNAc...) asparagine glycans are attached at residues asparagine 362 and asparagine 373. Asparagine 461 carries an N-linked (GlcNAc...) asparagine glycan. 3 N-linked (GlcNAc...) asparagine glycosylation sites follow: asparagine 532, asparagine 558, and asparagine 638. LRR repeat units lie at residues 640–662 (SMIYLDLSYNAVSGSIPLGYGAM), 664–686 (YLQVLNLGHNLLTGTIPDSFGGL), 688–711 (AIGVLDLSHNDLQGFLPGSLGGLS), and 712–734 (FLSDLDVSNNNLTGPIPFGGQLT). Residues asparagine 722 and asparagine 743 are each glycosylated (N-linked (GlcNAc...) asparagine). Positions 748–755 (CGVPLPPC) match the Cys pair 2 motif. The chain crosses the membrane as a helical span at residues 773–793 (IATGMSAGIVFSFMCIVMLIM). Over 794–1164 (ALYRARKVQK…LVEESRDKEP (371 aa)) the chain is Cytoplasmic. Threonine 847 and threonine 855 each carry phosphothreonine. In terms of domain architecture, Protein kinase spans 858–1136 (FSADSMIGSG…QVMTMFKELV (279 aa)). Residues 864-872 (IGSGGFGDV) and lysine 886 contribute to the ATP site. A Phosphotyrosine modification is found at tyrosine 931. The Proton acceptor role is filled by aspartate 985. A Phosphoserine modification is found at serine 1020. The residue at position 1028 (tyrosine 1028) is a Phosphotyrosine.

Belongs to the protein kinase superfamily. Ser/Thr protein kinase family. In terms of processing, autophosphorylated on Tyr and Thr residues. Predominantly expressed in vascular tissues. Expressed only during postembryonic development with a very discrete pattern of expression, preferentially in the two protophloem cell files at the elongation zone of the root. The expression in these two cell files attenuates as the phloem cells differentiate in the upper root. In cotyledons and leaves, it is expressed in phloem cells, starting at the cotyledons and shoot apex, moving toward the basal part of the leaves, where the expression is weak. Expressed in the secondary and tertiary veins and in the upper part of the cotyledons and leaves. Weakly or not expressed in the inflorescence stems. Has some complementary expression with BRL1.

The protein localises to the cell membrane. It carries out the reaction L-seryl-[protein] + ATP = O-phospho-L-seryl-[protein] + ADP + H(+). It catalyses the reaction L-threonyl-[protein] + ATP = O-phospho-L-threonyl-[protein] + ADP + H(+). The catalysed reaction is L-tyrosyl-[protein] + ATP = O-phospho-L-tyrosyl-[protein] + ADP + H(+). In terms of biological role, receptor with a dual specificity kinase activity acting on both serine/threonine- and tyrosine-containing substrates. Binds brassinolide. Regulates, in response to brassinosteroid binding, a signaling cascade involved in plant development. May be involved in cell growth and vascular differentiation. This is Receptor-like protein kinase BRI1-like 3 (BRL3) from Arabidopsis thaliana (Mouse-ear cress).